We begin with the raw amino-acid sequence, 318 residues long: MARKKISLIGGGQIGGVLAQLSALRELGDVVLFDIVEGLPQGKTLDIAEASPVDNFDVALSGANDYADIKGSDIVIVTAGLPRKPGMSRDDLIATNAKIMQSVSEGIKQYAPNAFVIVISNPLDAMVTLCQKITGFPSNRVMGMAGVLDSARFAAFIAWELGVSVKDVNAMVLGGHGDTMVPIIRYANVNGVPVMELLERKYNNDKAKAKEVMAALVKRTQGAGGEVVGLLKTGSAFYSPASSAIAMAESILRDQKRLLPVCALLNGEFGVKGYYVGVPCILGSNGIEKIVEFSLDAEEQAMFDNSVAAVKELVDSMK.

NAD(+)-binding positions include 10–15 (GGGQIG) and D34. Residues R83 and R89 each contribute to the substrate site. NAD(+) is bound by residues N96 and 119-121 (ISN). The substrate site is built by N121 and R152. H176 (proton acceptor) is an active-site residue.

This sequence belongs to the LDH/MDH superfamily. MDH type 3 family.

It carries out the reaction (S)-malate + NAD(+) = oxaloacetate + NADH + H(+). Its function is as follows. Catalyzes the reversible oxidation of malate to oxaloacetate. In Geotalea uraniireducens (strain Rf4) (Geobacter uraniireducens), this protein is Malate dehydrogenase.